The following is a 464-amino-acid chain: Glucose-6-phosphate isomerase (464 aa).

Glutamate 290 serves as the catalytic Proton donor. Active-site residues include histidine 319 and lysine 433.

It belongs to the GPI family.

It is found in the cytoplasm. The enzyme catalyses alpha-D-glucose 6-phosphate = beta-D-fructose 6-phosphate. The protein operates within carbohydrate biosynthesis; gluconeogenesis. It participates in carbohydrate degradation; glycolysis; D-glyceraldehyde 3-phosphate and glycerone phosphate from D-glucose: step 2/4. Its function is as follows. Catalyzes the reversible isomerization of glucose-6-phosphate to fructose-6-phosphate. In Carboxydothermus hydrogenoformans (strain ATCC BAA-161 / DSM 6008 / Z-2901), this protein is Glucose-6-phosphate isomerase.